The sequence spans 473 residues: ATP synthase subunit beta (473 aa).

Gly153–Thr160 contributes to the ATP binding site.

This sequence belongs to the ATPase alpha/beta chains family. In terms of assembly, F-type ATPases have 2 components, CF(1) - the catalytic core - and CF(0) - the membrane proton channel. CF(1) has five subunits: alpha(3), beta(3), gamma(1), delta(1), epsilon(1). CF(0) has three main subunits: a(1), b(2) and c(9-12). The alpha and beta chains form an alternating ring which encloses part of the gamma chain. CF(1) is attached to CF(0) by a central stalk formed by the gamma and epsilon chains, while a peripheral stalk is formed by the delta and b chains.

It is found in the cell inner membrane. It catalyses the reaction ATP + H2O + 4 H(+)(in) = ADP + phosphate + 5 H(+)(out). Produces ATP from ADP in the presence of a proton gradient across the membrane. The catalytic sites are hosted primarily by the beta subunits. This chain is ATP synthase subunit beta, found in Rickettsia canadensis (strain McKiel).